The sequence spans 127 residues: Aspartate 1-decarboxylase (127 aa).

Serine 25 (schiff-base intermediate with substrate; via pyruvic acid) is an active-site residue. Serine 25 carries the post-translational modification Pyruvic acid (Ser). Threonine 57 contributes to the substrate binding site. The active-site Proton donor is tyrosine 58. A substrate-binding site is contributed by 73–75 (GAA).

It belongs to the PanD family. Heterooctamer of four alpha and four beta subunits. Pyruvate is required as a cofactor. In terms of processing, is synthesized initially as an inactive proenzyme, which is activated by self-cleavage at a specific serine bond to produce a beta-subunit with a hydroxyl group at its C-terminus and an alpha-subunit with a pyruvoyl group at its N-terminus.

The protein localises to the cytoplasm. It carries out the reaction L-aspartate + H(+) = beta-alanine + CO2. Its pathway is cofactor biosynthesis; (R)-pantothenate biosynthesis; beta-alanine from L-aspartate: step 1/1. Catalyzes the pyruvoyl-dependent decarboxylation of aspartate to produce beta-alanine. The protein is Aspartate 1-decarboxylase of Clostridium kluyveri (strain NBRC 12016).